The chain runs to 199 residues: Protein-methionine-sulfoxide reductase heme-binding subunit MsrQ (199 aa).

The next 4 helical transmembrane spans lie at W10–I30, L82–I102, P116–T136, and V153–S173.

This sequence belongs to the MsrQ family. As to quaternary structure, heterodimer of a catalytic subunit (MsrP) and a heme-binding subunit (MsrQ). FMN serves as cofactor. The cofactor is heme b.

It is found in the cell inner membrane. In terms of biological role, part of the MsrPQ system that repairs oxidized periplasmic proteins containing methionine sulfoxide residues (Met-O), using respiratory chain electrons. Thus protects these proteins from oxidative-stress damage caused by reactive species of oxygen and chlorine generated by the host defense mechanisms. MsrPQ is essential for the maintenance of envelope integrity under bleach stress, rescuing a wide series of structurally unrelated periplasmic proteins from methionine oxidation, including the primary periplasmic chaperone SurA and the lipoprotein Pal. MsrQ provides electrons for reduction to the reductase catalytic subunit MsrP, using the quinone pool of the respiratory chain. The protein is Protein-methionine-sulfoxide reductase heme-binding subunit MsrQ of Salmonella dublin (strain CT_02021853).